The following is a 95-amino-acid chain: Defensin-like protein 247 (95 aa).

The first 24 residues, 1-24 (MKFAAIFLVTCVFFSLFSSNLSQG), serve as a signal peptide directing secretion. Disulfide bonds link Cys37/Cys94, Cys48/Cys77, Cys56/Cys87, and Cys75/Cys89.

It belongs to the DEFL family.

It localises to the secreted. This is Defensin-like protein 247 (SCRL6) from Arabidopsis thaliana (Mouse-ear cress).